Consider the following 340-residue polypeptide: Homeobox protein DBX2 (340 aa).

Residues 185 to 244 (GILRRAVFSEDQRKALEKMFQKQKYISKTDRKKLAINLGLKESQVKIWFQNRRMKWRNSK) constitute a DNA-binding region (homeobox). The segment at 283-313 (QQHPSPGWRENSPEPSERLIQGSPGAEALPP) is disordered.

It belongs to the H2.0 homeobox family.

The protein resides in the nucleus. This chain is Homeobox protein DBX2 (DBX2), found in Bos taurus (Bovine).